The primary structure comprises 383 residues: GTP-binding protein 10 (383 aa).

The 136-residue stretch at 13-148 folds into the Obg domain; sequence GNFIDNLRIY…RIIHLDLKLI (136 aa). Residues 149–344 form the OBG-type G domain; sequence SDVGLVGFPN…LIGCIRKTMD (196 aa). GTP is bound by residues 155–162, 202–206, and 278–281; these read GFPNAGKS, DLPGL, and NKMD. The segment at 362 to 383 is disordered; sequence LQKETSRTVKRNLKNSPQRTHH. The segment covering 369–383 has biased composition (basic residues); sequence TVKRNLKNSPQRTHH.

The protein belongs to the TRAFAC class OBG-HflX-like GTPase superfamily. OBG GTPase family.

It is found in the nucleus. It localises to the nucleolus. Its function is as follows. May be involved in the ribosome maturation process. The sequence is that of GTP-binding protein 10 (gtpbp10) from Xenopus tropicalis (Western clawed frog).